Consider the following 75-residue polypeptide: Acyl carrier protein (75 aa).

The Carrier domain maps to 1 to 75 (MSVFDKVKSI…DAVNYIKENQ (75 aa)). Ser35 carries the O-(pantetheine 4'-phosphoryl)serine modification.

The protein belongs to the acyl carrier protein (ACP) family. Post-translationally, 4'-phosphopantetheine is transferred from CoA to a specific serine of apo-ACP by AcpS. This modification is essential for activity because fatty acids are bound in thioester linkage to the sulfhydryl of the prosthetic group.

Its subcellular location is the cytoplasm. Its pathway is lipid metabolism; fatty acid biosynthesis. Carrier of the growing fatty acid chain in fatty acid biosynthesis. In Desulfitobacterium hafniense (strain Y51), this protein is Acyl carrier protein.